Here is a 241-residue protein sequence, read N- to C-terminus: Carboxy-S-adenosyl-L-methionine synthase (241 aa).

S-adenosyl-L-methionine-binding positions include Y38, 63–65 (GCS), 88–89 (DN), 116–117 (DI), N131, and R198.

This sequence belongs to the class I-like SAM-binding methyltransferase superfamily. Cx-SAM synthase family. As to quaternary structure, homodimer.

The enzyme catalyses prephenate + S-adenosyl-L-methionine = carboxy-S-adenosyl-L-methionine + 3-phenylpyruvate + H2O. Its function is as follows. Catalyzes the conversion of S-adenosyl-L-methionine (SAM) to carboxy-S-adenosyl-L-methionine (Cx-SAM). This is Carboxy-S-adenosyl-L-methionine synthase from Mannheimia succiniciproducens (strain KCTC 0769BP / MBEL55E).